The chain runs to 246 residues: Probable transcriptional regulatory protein KPK_1906 (246 aa).

The protein belongs to the TACO1 family.

It localises to the cytoplasm. The sequence is that of Probable transcriptional regulatory protein KPK_1906 from Klebsiella pneumoniae (strain 342).